Reading from the N-terminus, the 792-residue chain is Ribonucleoside-diphosphate reductase large subunit (792 aa).

One can recognise an ATP-cone domain in the interval 1 to 92; that stretch reads MHVIKRDGRQ…VSNLHKETKK (92 aa). ATP-binding positions include 5 to 6, 11 to 17, T53, and D57; these read KR and ERVMFDK. K17 carries the N6-acetyllysine modification. GDP contacts are provided by S202 and S217. A disulfide bond links C218 and C444. DTTP contacts are provided by residues 226–228, K243, R256, and 263–264; these read DSI and AG. N6-acetyllysine is present on K376. Residue N427 coordinates GDP. The Proton acceptor role is filled by N427. C429 (cysteine radical intermediate) is an active-site residue. Residues E431 and 604-607 each bind GDP; that span reads TAST. Residue E431 is the Proton acceptor of the active site. T751 is subject to Phosphothreonine.

It belongs to the ribonucleoside diphosphate reductase large chain family. In terms of assembly, heterodimer of a large and a small subunit. Interacts with RRM2B. Interacts with AHCYL1 which inhibits its activity.

It is found in the cytoplasm. It carries out the reaction a 2'-deoxyribonucleoside 5'-diphosphate + [thioredoxin]-disulfide + H2O = a ribonucleoside 5'-diphosphate + [thioredoxin]-dithiol. Its activity is regulated as follows. Under complex allosteric control mediated by deoxynucleoside triphosphates and ATP binding to separate specificity and activation sites on the M1 subunit. The type of nucleotide bound at the specificity site determines substrate preference. It seems probable that ATP makes the enzyme reduce CDP and UDP, dGTP favors ADP reduction and dTTP favors GDP reduction. Stimulated by ATP and inhibited by dATP binding to the activity site, the dATP inhibition is mediated by AHCYL1 which stabilizes dATP in the site. Its function is as follows. Provides the precursors necessary for DNA synthesis. Catalyzes the biosynthesis of deoxyribonucleotides from the corresponding ribonucleotides. This is Ribonucleoside-diphosphate reductase large subunit (Rrm1) from Mus musculus (Mouse).